Here is a 305-residue protein sequence, read N- to C-terminus: Dihydroorotate dehydrogenase B (NAD(+)), catalytic subunit (305 aa).

FMN-binding positions include Ser21 and Lys45 to Ala46. Residues Lys45 and Asn69–Leu73 each bind substrate. Asn99 and Asn127 together coordinate FMN. Asn127 contacts substrate. Catalysis depends on Cys130, which acts as the Nucleophile. Residues Lys165 and Ile190 each contribute to the FMN site. Asn191–Thr192 provides a ligand contact to substrate. Residues Gly216, Gly242–Gly243, and Gly264–Thr265 contribute to the FMN site.

Belongs to the dihydroorotate dehydrogenase family. Type 1 subfamily. In terms of assembly, heterotetramer of 2 PyrK and 2 PyrD type B subunits. It depends on FMN as a cofactor.

The protein resides in the cytoplasm. It catalyses the reaction (S)-dihydroorotate + NAD(+) = orotate + NADH + H(+). It participates in pyrimidine metabolism; UMP biosynthesis via de novo pathway; orotate from (S)-dihydroorotate (NAD(+) route): step 1/1. In terms of biological role, catalyzes the conversion of dihydroorotate to orotate with NAD(+) as electron acceptor. This Staphylococcus carnosus (strain TM300) protein is Dihydroorotate dehydrogenase B (NAD(+)), catalytic subunit (pyrD).